The following is a 96-amino-acid chain: Small ribosomal subunit protein bS6 (96 aa).

The protein belongs to the bacterial ribosomal protein bS6 family.

In terms of biological role, binds together with bS18 to 16S ribosomal RNA. The sequence is that of Small ribosomal subunit protein bS6 from Streptococcus uberis (strain ATCC BAA-854 / 0140J).